Consider the following 313-residue polypeptide: D-alanine--D-alanine ligase (313 aa).

The ATP-grasp domain maps to 108 to 308 (KLVWQQTGVP…YSELVVKVLS (201 aa)). 138–193 (VAKLGLPLFVKPASEGSSVAVLKVKTADALPAALAEAATHDKIVIVEKSIEGGGEY) provides a ligand contact to ATP. Mg(2+) contacts are provided by Asp-262, Glu-275, and Asn-277.

It belongs to the D-alanine--D-alanine ligase family. Requires Mg(2+) as cofactor. It depends on Mn(2+) as a cofactor.

It is found in the cytoplasm. It carries out the reaction 2 D-alanine + ATP = D-alanyl-D-alanine + ADP + phosphate + H(+). The protein operates within cell wall biogenesis; peptidoglycan biosynthesis. Cell wall formation. The polypeptide is D-alanine--D-alanine ligase (Burkholderia multivorans (strain ATCC 17616 / 249)).